We begin with the raw amino-acid sequence, 396 residues long: MDENENSQSPAPSHQYPKETLRKRQNSVQNSGGSESSRLSRKSFKLDYRLEEDVTKSKKGKDGRFVNPWPTWKNVSIPNVLRWLIMEKDHSSVPGSKEELDKELPVLKPYFISDPEEAGVREAGLRVTWLGHATLMVEMDELILLTDPMFSSRASPSQYMGPKRFRRPPCTISELPPIDAVLISHNHYDHLDYGSVLALNERFGSELRWFVPLGLLDWMQKCGCENVIELDWWEENCVPGHDKVTFVFTPSQHWCKRTLLDDNKVLWGSWSVLGPWNRFFFAGDTGYCPAFEEIGKRFGPFDLAAIPIGAYEPRWFMKYQHADPEDAVRIHIDVQAKRSVAIHWGTFALANEHYLEPPVKLNEALERYGLKSEDFFILKHGESRYLNTDDKAFEET.

Residue Met1 is modified to N-acetylmethionine. Composition is skewed to polar residues over residues Met1–Pro12 and Asn26–Ser37. The segment at Met1–Arg41 is disordered. Zn(2+)-binding residues include His185 and His187. Tyr188 is a binding site for an N-acyl-1,2-diacyl-sn-glycero-3-phosphoethanolamine. Zn(2+) contacts are provided by Asp189, His190, and His253. Deoxycholate is bound at residue Lys256. Asp284 lines the Zn(2+) pocket. His321 serves as a coordination point for an N-acyl-1,2-diacyl-sn-glycero-3-phosphoethanolamine. Residue His343 coordinates Zn(2+). Deoxycholate is bound at residue Ala348.

The protein belongs to the NAPE-PLD family. In terms of assembly, homodimer. Bile acids promote the assembly of inactive monomers into an active dimer and enable catalysis. It depends on Zn(2+) as a cofactor. In terms of tissue distribution, widely expressed. Highest expression in brain, kidney and testis (at protein level). Expressed in adipose tissue (at protein level).

The protein localises to the golgi apparatus membrane. The protein resides in the early endosome membrane. Its subcellular location is the nucleus envelope. It localises to the nucleus. It is found in the nucleoplasm. The enzyme catalyses an N-acyl-1,2-diacyl-sn-glycero-3-phosphoethanolamine + H2O = an N-acylethanolamine + a 1,2-diacyl-sn-glycero-3-phosphate + H(+). It catalyses the reaction N-butanoyl-1-hexadecanoyl-2-(9Z,12Z-octadecadienoyl)-sn-glycero-3-phosphoethanolamine + H2O = N-butanoyl ethanolamine + 1-hexadecanoyl-2-(9Z,12Z-octadecadienoyl)-sn-glycero-3-phosphate + H(+). The catalysed reaction is N-hexanoyl-1-hexadecanoyl-2-(9Z,12Z-octadecadienoyl)-sn-glycero-3-phosphoethanolamine + H2O = N-hexanoyl ethanolamine + 1-hexadecanoyl-2-(9Z,12Z-octadecadienoyl)-sn-glycero-3-phosphate + H(+). It carries out the reaction N-octanoyl-1-hexadecanoyl-2-(9Z,12Z-octadecadienoyl)-sn-glycero-3-phosphoethanolamine + H2O = N-octanoyl ethanolamine + 1-hexadecanoyl-2-(9Z,12Z-octadecadienoyl)-sn-glycero-3-phosphate + H(+). The enzyme catalyses N-decanoyl-1-hexadecanoyl-2-(9Z,12Z-octadecadienoyl)-sn-glycero-3-phosphoethanolamine + H2O = N-decanoyl ethanolamine + 1-hexadecanoyl-2-(9Z,12Z-octadecadienoyl)-sn-glycero-3-phosphate + H(+). It catalyses the reaction N-dodecanoyl-1,2-di-(9Z-octadecenoyl)-sn-glycero-3-phosphoethanolamine + H2O = N-dodecanoylethanolamine + 1,2-di-(9Z-octadecenoyl)-sn-glycero-3-phosphate + H(+). The catalysed reaction is N-tetradecanoyl-1,2-di-(9Z-octadecenoyl)-sn-glycero-3-phosphoethanolamine + H2O = N-tetradecanoylethanolamine + 1,2-di-(9Z-octadecenoyl)-sn-glycero-3-phosphate + H(+). It carries out the reaction N-hexadecanoyl-1,2-di-(9Z-octadecenoyl)-sn-glycero-3-phosphoethanolamine + H2O = N-hexadecanoylethanolamine + 1,2-di-(9Z-octadecenoyl)-sn-glycero-3-phosphate + H(+). The enzyme catalyses N,1-dihexadecanoyl-2-(9Z,12Z-octadecadienoyl)-sn-glycero-3-phosphoethanolamine + H2O = 1-hexadecanoyl-2-(9Z,12Z-octadecadienoyl)-sn-glycero-3-phosphate + N-hexadecanoylethanolamine + H(+). It catalyses the reaction N-octadecanoyl-1,2-di-(9Z-octadecenoyl)-sn-glycero-3-phosphoethanolamine + H2O = N-octadecanoyl ethanolamine + 1,2-di-(9Z-octadecenoyl)-sn-glycero-3-phosphate + H(+). The catalysed reaction is N,1,2-tri-(9Z-octadecenoyl)-sn-glycero-3-phosphoethanolamine + H2O = N-(9Z-octadecenoyl) ethanolamine + 1,2-di-(9Z-octadecenoyl)-sn-glycero-3-phosphate + H(+). It carries out the reaction N-(5Z,8Z,11Z,14Z-eicosatetraenoyl)-1,2-diacyl-sn-glycero-3-phosphoethanolamine + H2O = N-(5Z,8Z,11Z,14Z-eicosatetraenoyl)-ethanolamine + a 1,2-diacyl-sn-glycero-3-phosphate + H(+). The enzyme catalyses N-(5Z,8Z,11Z,14Z-eicosatetraenoyl)-1,2-di-(9Z-octadecenoyl)-sn-glycero-3-phosphoethanolamine + H2O = N-(5Z,8Z,11Z,14Z-eicosatetraenoyl)-ethanolamine + 1,2-di-(9Z-octadecenoyl)-sn-glycero-3-phosphate + H(+). It catalyses the reaction 1-O-(1Z-octadecenoyl)-2-(9Z-octadecenoyl)-sn-glycero-3-phospho-N-hexadecanoyl-ethanolamine + H2O = 1-O-(1Z-octadecenoyl)-2-(9Z-octadecenoyl)-sn-glycero-3-phosphate + N-hexadecanoylethanolamine + H(+). The catalysed reaction is N,1-diacyl-sn-glycero-3-phosphoethanolamine + H2O = an N-acylethanolamine + a 1-acyl-sn-glycero-3-phosphate + H(+). It carries out the reaction N,1-dihexadecanoyl-sn-glycero-3-phosphoethanolamine + H2O = N-hexadecanoylethanolamine + 1-hexadecanoyl-sn-glycero-3-phosphate + H(+). The enzyme catalyses N-(5Z,8Z,11Z,14Z-eicosatetraenoyl)-1-(9Z-octadecenoyl)-sn-glycero-3-phosphoethanolamine + H2O = N-(5Z,8Z,11Z,14Z-eicosatetraenoyl)-ethanolamine + 1-(9Z-octadecenoyl)-sn-glycero-3-phosphate + H(+). Activated by divalent cations. Activated by bile acids. Activated by membrane phospholipids such as phosphatidylethanolamines. Inhibited by cardiolipins. D-type phospholipase that hydrolyzes N-acyl-phosphatidylethanolamines (NAPEs) to produce bioactive N-acylethanolamines/fatty acid ethanolamides (NAEs/FAEs) and phosphatidic acid. Cleaves the terminal phosphodiester bond of diacyl- and alkenylacyl-NAPEs, primarily playing a role in the generation of long-chain saturated and monounsaturated NAEs in the brain. May control NAPE homeostasis in dopaminergic neuron membranes and regulate neuron survival, partly through RAC1 activation. As a regulator of lipid metabolism in the adipose tissue, mediates the crosstalk between adipocytes, gut microbiota and immune cells to control body temperature and weight. In particular, regulates energy homeostasis by promoting cold-induced brown or beige adipocyte differentiation program to generate heat from fatty acids and glucose. Has limited D-type phospholipase activity toward N-acyl lyso-NAPEs. In Rattus norvegicus (Rat), this protein is N-acyl-phosphatidylethanolamine-hydrolyzing phospholipase D (Napepld).